We begin with the raw amino-acid sequence, 181 residues long: MSQVSAEDKLDYVKSKIGEYPNFPKEGILFRDIFGALTDPKACVYLRDLLVQYIRQSQPEVEVIVGLDSRGFLFNLLLATELGVGYTPIRKKGKLAGEVVSVEYQLEYGSDTFELQRTAIQPGQKVVIVDDLLATGGSLLAASELVRKVGGVVLESLVVMELVGLDGRKKLDCKVHSLIKY.

The protein belongs to the purine/pyrimidine phosphoribosyltransferase family. As to quaternary structure, homodimer.

It is found in the cytoplasm. The catalysed reaction is AMP + diphosphate = 5-phospho-alpha-D-ribose 1-diphosphate + adenine. Its pathway is purine metabolism; AMP biosynthesis via salvage pathway; AMP from adenine: step 1/1. Its function is as follows. Catalyzes a salvage reaction resulting in the formation of AMP, that is energically less costly than de novo synthesis. This is Adenine phosphoribosyltransferase (Aprt) from Drosophila pseudoobscura pseudoobscura (Fruit fly).